Reading from the N-terminus, the 439-residue chain is MALNKLLSLTFQLLLFLLSVSSESPWIAEDTSQIQTKLLEFAKSPEVFDWMVKIRRKIHENPELGYEELETSKLIRSELELIGIKYRYPVAITGVIGYIGTGEPPFVALRADMDALPIQEGVEWEHKSKIAGKMHACGHDGHVTMLLGAAKILHEHRHHLQGTVVLIFQPAEEGLSGAKKMREEGALKNVEAIFGIHLSARIPFGKAASRAGSFLAGAGVFEAVITGKGGHAAIPQHTIDPVVAASSIVLSLQQLVSRETDPLDSKVVTVSKVNGGNAFNVIPDSITIGGTLRAFTGFTQLQQRVKEVITKQAAVHRCNASVNLTPNGREPMPPTVNNKDLYKQFKKVVRDLLGQEAFVEAAPVMGSEDFSYFAETIPGHFSLLGMQDETNGYASSHSPLYRINEDVLPYGAAIHASMAVQYLKEKASKGSVSGFHEEL.

The signal sequence occupies residues Met-1–Ser-21. Mn(2+) contacts are provided by Cys-137, His-139, Glu-173, His-197, and His-397. A Prevents secretion from ER motif is present at residues His-436–Leu-439.

It belongs to the peptidase M20 family. As to quaternary structure, monomer. It depends on Mn(2+) as a cofactor. In terms of tissue distribution, expressed in leaves, stems, siliques, seeds and flowers. Detected in the distal tips of cotyledons and seedling leaves, hydathodes of leaves from mature plants, pollen, ovules and developing seeds.

It is found in the endoplasmic reticulum lumen. In terms of biological role, hydrolyzes certain amino acid conjugates of the plant growth regulator indole-3-acetic acid (IAA), including IAA-Ala, IAA-Leu, IAA-Met, IAA-Phe, IAA-Ser, IAA-Thr, IAA-Tyr and IAA-Val. Is the most efficient enzyme of the ILL family for IAA-Ala. Not important for IAA-Leu hydrolysis in roots. May act with ILR1 to provide free IAA to germinating seedlings. This is IAA-amino acid hydrolase ILR1-like 2 from Arabidopsis thaliana (Mouse-ear cress).